The primary structure comprises 212 residues: MNLLIMGLPGAGKGTQAAKIVEEFGVAHISTGDMFRAAMANQTEMGRLAKSYIDKGELVPDEVTNGIVKERLAEDDIAEKGFLLDGYPRTIEQAHALDATLEELGLRLDGVINIKVDPSCLIERLSGRIINRKTGETFHKVFNPPVDYKEEDYYQREDDKPETVKRRLDVNIAQGEPILEHYRKLGLVTDIEGNQEITEVFADVEKALLELK.

10–15 (GAGKGT) lines the ATP pocket. Residues 30 to 59 (STGDMFRAAMANQTEMGRLAKSYIDKGELV) are NMP. AMP is bound by residues Thr31, Arg36, 57 to 59 (ELV), 86 to 89 (GYPR), and Gln93. Positions 127–159 (GRIINRKTGETFHKVFNPPVDYKEEDYYQREDD) are LID. ATP contacts are provided by residues Arg128 and 137-138 (TF). Residues Arg156 and Arg167 each contribute to the AMP site. An ATP-binding site is contributed by Gln195.

It belongs to the adenylate kinase family. As to quaternary structure, monomer.

The protein localises to the cytoplasm. It carries out the reaction AMP + ATP = 2 ADP. Its pathway is purine metabolism; AMP biosynthesis via salvage pathway; AMP from ADP: step 1/1. Functionally, catalyzes the reversible transfer of the terminal phosphate group between ATP and AMP. Plays an important role in cellular energy homeostasis and in adenine nucleotide metabolism. The chain is Adenylate kinase from Streptococcus agalactiae serotype III (strain NEM316).